A 158-amino-acid chain; its full sequence is Superoxide dismutase [Cu-Zn] (158 aa).

Cu cation-binding residues include His-46, His-48, and His-63. The cysteines at positions 57 and 149 are disulfide-linked. Zn(2+) is bound by residues His-63, His-71, His-80, and Asp-83. Residue His-120 participates in Cu cation binding.

This sequence belongs to the Cu-Zn superoxide dismutase family. In terms of assembly, homodimer. Cu cation serves as cofactor. It depends on Zn(2+) as a cofactor.

Its subcellular location is the cytoplasm. It carries out the reaction 2 superoxide + 2 H(+) = H2O2 + O2. Functionally, destroys radicals which are normally produced within the cells and which are toxic to biological systems. The polypeptide is Superoxide dismutase [Cu-Zn] (sod-1) (Onchocerca volvulus).